The primary structure comprises 337 residues: Ribonucleoside-diphosphate reductase small chain (337 aa).

The Fe cation site is built by Asp85, Glu116, and His119. Tyr123 is an active-site residue. Glu178, Glu212, and His215 together coordinate Fe cation.

This sequence belongs to the ribonucleoside diphosphate reductase small chain family. Heterodimer of a large and a small subunit. Fe cation is required as a cofactor.

The catalysed reaction is a 2'-deoxyribonucleoside 5'-diphosphate + [thioredoxin]-disulfide + H2O = a ribonucleoside 5'-diphosphate + [thioredoxin]-dithiol. Its function is as follows. Provides the precursors necessary for DNA synthesis. Catalyzes the biosynthesis of deoxyribonucleotides from the corresponding ribonucleotides. This is Ribonucleoside-diphosphate reductase small chain (RNR2) from Trypanosoma brucei brucei.